The sequence spans 148 residues: Large ribosomal subunit protein bL9 (148 aa).

It belongs to the bacterial ribosomal protein bL9 family.

Its function is as follows. Binds to the 23S rRNA. The protein is Large ribosomal subunit protein bL9 of Oceanobacillus iheyensis (strain DSM 14371 / CIP 107618 / JCM 11309 / KCTC 3954 / HTE831).